A 540-amino-acid chain; its full sequence is Putative rhamnogalacturonase (540 aa).

The first 23 residues, 1-23, serve as a signal peptide directing secretion; it reads MGFLTLFHMAFLAVSLFVSGALA. 2 disulfide bridges follow: cysteine 53/cysteine 100 and cysteine 192/cysteine 203. Residue asparagine 89 is glycosylated (N-linked (GlcNAc...) asparagine). The N-linked (GlcNAc...) asparagine glycan is linked to asparagine 368.

The protein belongs to the polysaccharide lyase 4 family.

The protein resides in the secreted. It catalyses the reaction Endotype eliminative cleavage of L-alpha-rhamnopyranosyl-(1-&gt;4)-alpha-D-galactopyranosyluronic acid bonds of rhamnogalacturonan I domains in ramified hairy regions of pectin leaving L-rhamnopyranose at the reducing end and 4-deoxy-4,5-unsaturated D-galactopyranosyluronic acid at the non-reducing end.. Its function is as follows. Could be a pectinolytic enzyme that hydrolyzes the alpha-L-rhamnopyranosyl-(1,4)-alpha-D-galacturonopyranosyl glycosidic linkage by beta-elimination, thereby generating oligosaccharides terminating at the non-reducing end with a hex-4-enopyranosyluronic acid residue. The protein is Putative rhamnogalacturonase (asd-1) of Neurospora crassa (strain ATCC 24698 / 74-OR23-1A / CBS 708.71 / DSM 1257 / FGSC 987).